Consider the following 1066-residue polypeptide: MAESVPIPEPPGYPLIGNLGEFTSNPLSDLNRLADTYGPIFRLRLGAKAPIFVSSNSLINEVCDEKRFKKTLKSVLSQVREGVHDGLFTAFEDEPNWGKAHRILVPAFGPLSIRGMFPEMHDIATQLCMKFARHGPRTPIDTSDNFTRLALDTLALCAMDFRFYSYYKEELHPFIEAMGDFLTESGNRNRRPPFAPNFLYRAANEKFYGDIALMKSVADEVVAARKASPSDRKDLLAAMLNGVDPQTGEKLSDENITNQLITFLIAGHETTSGTLSFAMYQLLKNPEAYSKVQKEVDEVVGRGPVLVEHLTKLPYISAVLRETLRLNSPITAFGLEAIDDTFLGGKYLVKKGEIVTALLSRGHVDPVVYGNDADKFIPERMLDDEFARLNKEYPNCWKPFGNGKRACIGRPFAWQESLLAMVVLFQNFNFTMTDPNYALEIKQTLTIKPDHFYINATLRHGMTPTELEHVLAGNGATSSSTHNIKAAANLDAKAGSGKPMAIFYGSNSGTCEALANRLASDAPSHGFSATTVGPLDQAKQNLPEDRPVVIVTASYEGQPPSNAAHFIKWMEDLDGNDMEKVSYAVFACGHHDWVETFHRIPKLVDSTLEKRGGTRLVPMGSADAATSDMFSDFEAWEDIVLWPGLKEKYKISDEESGGQKGLLVEVSTPRKTSLRQDVEEALVVAEKTLTKSGPAKKHIEIQLPSAMTYKAGDYLAILPLNPKSTVARVFRRFSLAWDSFLKIQSEGPTTLPTNVAISAFDVFSAYVELSQPATKRNILALAEATEDKDTIQELERLAGDAYQAEISPKRVSVLDLLEKFPAVALPISSYLAMLPPMRVRQYSISSSPFADPSKLTLTYSLLDAPSLSGQGRHVGVATNFLSHLTAGDKLHVSVRASSEAFHLPSDAEKTPIICVAAGTGLAPLRGFIQERAAMLAAGRTLAPALLFFGCRNPEIDDLYAEEFERWEKMGAVDVRRAYSRATDKSEGCKYVQDRVYHDRADVFKVWDQGAKVFICGSREIGKAVEDVCVRLAIEKAQQNGRDVTEEMARAWFERSRNERFATDVFD.

The segment at 1 to 480 is cytochrome P450; sequence MAESVPIPEP…LAGNGATSSS (480 aa). Cys-407 contacts heme. Residues 481-1066 form an NADPH-P-450 reductase region; that stretch reads THNIKAAANL…NERFATDVFD (586 aa). One can recognise a Flavodoxin-like domain in the interval 500–641; that stretch reads MAIFYGSNSG…DFEAWEDIVL (142 aa). FMN-binding positions include 506 to 511, 554 to 557, Cys-588, and Thr-596; these read SNSGTC and SYEG. An FAD-binding FR-type domain is found at 676–904; it reads QDVEEALVVA…RASSEAFHLP (229 aa).

In the N-terminal section; belongs to the cytochrome P450 family. Requires FAD as cofactor. FMN serves as cofactor. The cofactor is heme.

The protein resides in the membrane. The enzyme catalyses an organic molecule + reduced [NADPH--hemoprotein reductase] + O2 = an alcohol + oxidized [NADPH--hemoprotein reductase] + H2O + H(+). The catalysed reaction is 2 oxidized [cytochrome P450] + NADPH = 2 reduced [cytochrome P450] + NADP(+) + H(+). Stimulated NADPH--cytochrome reductase activity in the presence of substrate. Inhibited by fatty acid substrates longer than 13 carbons and the degree of inhibition increases with increasing chain length. Functionally, functions as a fatty acid monooxygenase. Catalyzes hydroxylation of fatty acids at omega-1, omega-2 and omega-3 positions. Shows activity toward fatty acids with a chain length of 9-18 carbons with optimum chain lengths of 12-14 carbons (lauric, tridecylic and myristic acids). Can also use shorter saturated fatty acids with a chain length of 9 or 10 carbons as substrates. Also displays a NADPH-dependent reductase activity in the C-terminal domain, which allows electron transfer from NADPH to the heme iron of the cytochrome P450 N-terminal domain. This Fusarium oxysporum (Fusarium vascular wilt) protein is Bifunctional cytochrome P450/NADPH--P450 reductase.